We begin with the raw amino-acid sequence, 203 residues long: uncharacterized protein (203 aa).

A disordered region spans residues 174–203 (LASSKNPRARSPGLDPLGSSETLWSHRGGH).

This is an uncharacterized protein from Homo sapiens (Human).